The sequence spans 404 residues: Multidrug resistance protein MdtG (404 aa).

The next 11 membrane-spanning stretches (helical) occupy residues 19–39 (LGCF…PLYV), 56–76 (LVFS…GGLA), 90–110 (LGMA…QFLI), 113–133 (ALLG…ATQV), 144–164 (TLST…GLLA), 171–191 (PVFF…FFFI), 222–242 (LFVT…ILTL), 254–274 (IAFI…LSAP), 288–308 (ILIV…FVQT), 317–337 (FLLG…LVYN), and 376–396 (AVFC…WNSL).

It belongs to the major facilitator superfamily. DHA1 family. MdtG (TC 2.A.1.2.20) subfamily.

The protein localises to the cell inner membrane. The sequence is that of Multidrug resistance protein MdtG from Salmonella typhi.